We begin with the raw amino-acid sequence, 289 residues long: Pyridoxal kinase PdxY (289 aa).

Residues serine 9 and 44 to 45 each bind substrate; that span reads TQ. Positions 112, 144, 149, and 182 each coordinate ATP. Substrate is bound at residue aspartate 225.

Belongs to the pyridoxine kinase family. PdxY subfamily. Homodimer. Mg(2+) is required as a cofactor.

The catalysed reaction is pyridoxal + ATP = pyridoxal 5'-phosphate + ADP + H(+). It participates in cofactor metabolism; pyridoxal 5'-phosphate salvage; pyridoxal 5'-phosphate from pyridoxal: step 1/1. Pyridoxal kinase involved in the salvage pathway of pyridoxal 5'-phosphate (PLP). Catalyzes the phosphorylation of pyridoxal to PLP. The chain is Pyridoxal kinase PdxY from Aliivibrio fischeri (strain ATCC 700601 / ES114) (Vibrio fischeri).